A 155-amino-acid chain; its full sequence is MYKMQLLSCIALTLVLVANSAPITSSSTKETEQQMEQLLLDLQLLLNGVNNYENPQLSRMLTFKFYTPKKATEFTHLQCLAEELKNLEEVLGLPQSKNVHLTDTKELISNMNVTLLKLKGSETSYNCEYDDETATITEFLNKWITFCQSIFSTLT.

Positions 1–20 (MYKMQLLSCIALTLVLVANS) are cleaved as a signal peptide. Residue T24 is glycosylated (O-linked (GalNAc...) threonine). C79 and C127 are joined by a disulfide. N-linked (GlcNAc...) asparagine glycosylation is present at N112.

The protein belongs to the IL-2 family.

It localises to the secreted. Cytokine produced by activated CD4-positive helper T-cells and to a lesser extend activated CD8-positive T-cells and natural killer (NK) cells that plays pivotal roles in the immune response and tolerance. Binds to a receptor complex composed of either the high-affinity trimeric IL-2R (IL2RA/CD25, IL2RB/CD122 and IL2RG/CD132) or the low-affinity dimeric IL-2R (IL2RB and IL2RG). Interaction with the receptor leads to oligomerization and conformation changes in the IL-2R subunits resulting in downstream signaling starting with phosphorylation of JAK1 and JAK3. In turn, JAK1 and JAK3 phosphorylate the receptor to form a docking site leading to the phosphorylation of several substrates including STAT5. This process leads to activation of several pathways including STAT, phosphoinositide-3-kinase/PI3K and mitogen-activated protein kinase/MAPK pathways. Functions as a T-cell growth factor and can increase NK-cell cytolytic activity as well. Promotes strong proliferation of activated B-cells and subsequently immunoglobulin production. Plays a pivotal role in regulating the adaptive immune system by controlling the survival and proliferation of regulatory T-cells, which are required for the maintenance of immune tolerance. Moreover, participates in the differentiation and homeostasis of effector T-cell subsets, including Th1, Th2, Th17 as well as memory CD8-positive T-cells. This is Interleukin-2 (IL2) from Canis lupus familiaris (Dog).